Consider the following 271-residue polypeptide: Methylcorrinoid:tetrahydrofolate methyltransferase (271 aa).

The Pterin-binding domain occupies 1 to 247 (MIIIGEKLNG…GAIFATDALL (247 aa)).

Belongs to the vitamin-B12 dependent methionine synthase family. In terms of assembly, the proline betaine:THF methyl transfer system is composed of two methyltransferases, MtpB and MtqA, and the corrinoid protein MtqC. The L-carnitine:THF methyl transfer system is composed of two methyltransferases, MtcB and MtqA, and the corrinoid protein MtqC.

It catalyses the reaction methyl-Co(III)-[quaternary-amine-specific corrinoid protein] + (6S)-5,6,7,8-tetrahydrofolate = Co(I)-[quaternary-amine-specific corrinoid protein] + (6S)-5-methyl-5,6,7,8-tetrahydrofolate + H(+). Its function is as follows. Involved in the degradation of the quaternary amines L-proline betaine and L-carnitine. Component of a corrinoid-dependent methyltransferase system that transfers a methyl group from L-proline betaine or L-carnitine to tetrahydrofolate (THF), forming methyl-THF, a key intermediate in the Wood-Ljungdahl acetogenesis pathway. MtqA catalyzes the transfer of a methyl group from the methylated corrinoid protein MtqC to THF, forming methyl-THF. The chain is Methylcorrinoid:tetrahydrofolate methyltransferase from Eubacterium limosum.